The following is a 182-amino-acid chain: Peptidoglycan L,D-endopeptidase MepK (182 aa).

Residues 1 to 30 constitute a signal peptide (tat-type signal); it reads MDKFDANRRKLLALGGVALGAAILPTPAFA. The Zn(2+) site is built by histidine 133, aspartate 140, and histidine 173.

It belongs to the peptidase M15 family. The cofactor is Zn(2+). Predicted to be exported by the Tat system. The position of the signal peptide cleavage has not been experimentally proven.

It participates in cell wall biogenesis; cell wall polysaccharide biosynthesis. Its function is as follows. L,D-endopeptidase that cleaves meso-diaminopimelic acid (mDAP)-mDAP cross-links in peptidoglycan. It works in conjunction with other elongation-specific D,D-endopeptidases to make space for efficient incorporation of nascent peptidoglycan strands into the sacculus and thus enable cell wall expansion. The chain is Peptidoglycan L,D-endopeptidase MepK from Escherichia coli O157:H7.